The following is a 161-amino-acid chain: Large ribosomal subunit protein uL15 (161 aa).

Positions 1–43 (MKLSDIADNAGARKKRMRVGRGIGSGKGKTSGRGGKGQTARSG) are disordered. Residues 21-37 (RGIGSGKGKTSGRGGKG) show a composition bias toward gly residues.

It belongs to the universal ribosomal protein uL15 family. In terms of assembly, part of the 50S ribosomal subunit.

Its function is as follows. Binds to the 23S rRNA. The polypeptide is Large ribosomal subunit protein uL15 (Bradyrhizobium sp. (strain ORS 278)).